Consider the following 314-residue polypeptide: Short-chain dehydrogenase/reductase drtF (314 aa).

Residues valine 26, lysine 50, aspartate 73, asparagine 100, tyrosine 185, and lysine 189 each coordinate NADP(+). Tyrosine 185 (proton acceptor) is an active-site residue. Lysine 189 serves as the catalytic Lowers pKa of active site Tyr.

Belongs to the short-chain dehydrogenases/reductases (SDR) family.

The protein operates within secondary metabolite biosynthesis; terpenoid biosynthesis. In terms of biological role, short-chain dehydrogenase/reductase; part of the gene cluster that mediates the biosynthesis of various drimane-type sesquiterpene esters, compounds that exhibit diverse biological activities and are widely present in eukaryotes. The pathway begins with the synthesis of the backbone drimenol by the terpene cyclase drtB using farnesyl pyrophosphate (FPP) as substrate. The cytochrome P450 monooxygenase drtD is then responsible for the hydroxylations at C-6, C-9 and C-12, as well as the oxidation of hydroxyl groups at C-6 and C-11 to a ketone and an aldehyde, respectively. Then, the biosynthesis can go in two directions, either the hydroxylated drimenol is further hydroxylated at C-2 and C-3 by an enzyme(s) not associated with the drt cluster, or the FAD-binding oxidoreductase drtC further oxidizes C-11 or C-12 to form the butyrolactone ring. DrtB, drtD and drtC are solely responsible for the formation of the different drimane structures observed during drimane sesquiterpenes biosynthesis. The polyketide synthase drtA synthesizes different lengths (C6 and C8) of PKS chains, which are then oxidized to varying degrees by the short-chain dehydrogenase drtF. Finally, these PKS chains are transferred onto drimane sesquiterpenes by the acyltransferase drtE, forming the sesquiterpene esters. In addition to the different fatty acyl-CoA chains produced by drtA, drtE is also able to use cinnamoyl-CoA as a substrate. This Aspergillus calidoustus protein is Short-chain dehydrogenase/reductase drtF.